A 221-amino-acid polypeptide reads, in one-letter code: UPF0502 protein Sputw3181_2381 (221 aa).

It belongs to the UPF0502 family.

This Shewanella sp. (strain W3-18-1) protein is UPF0502 protein Sputw3181_2381.